The chain runs to 446 residues: N-succinylarginine dihydrolase (446 aa).

Substrate-binding positions include 19–28, asparagine 110, and 137–138; these read AGLSFGNVAS and HR. Residue glutamate 174 is part of the active site. Residue arginine 213 participates in substrate binding. Residue histidine 249 is part of the active site. Residues aspartate 251 and asparagine 364 each contribute to the substrate site. Cysteine 370 acts as the Nucleophile in catalysis.

It belongs to the succinylarginine dihydrolase family. As to quaternary structure, homodimer.

The catalysed reaction is N(2)-succinyl-L-arginine + 2 H2O + 2 H(+) = N(2)-succinyl-L-ornithine + 2 NH4(+) + CO2. Its pathway is amino-acid degradation; L-arginine degradation via AST pathway; L-glutamate and succinate from L-arginine: step 2/5. Functionally, catalyzes the hydrolysis of N(2)-succinylarginine into N(2)-succinylornithine, ammonia and CO(2). In Burkholderia cenocepacia (strain HI2424), this protein is N-succinylarginine dihydrolase.